The following is a 552-amino-acid chain: Metal transporter Nramp6.1 (552 aa).

An N-linked (GlcNAc...) asparagine glycan is attached at Asn11. Transmembrane regions (helical) follow at residues 55 to 75 (FLSY…PGNL), 88 to 108 (ELLW…SLAA), 133 to 155 (CLWL…GTAF), 159 to 181 (ILFN…LLLG), 189 to 209 (KLEL…FGEM), 238 to 258 (IALL…ALVL), and 275 to 295 (YFLI…LAVI). The N-linked (GlcNAc...) asparagine glycan is linked to Asn306. The next 5 membrane-spanning stretches (helical) occupy residues 338-358 (IYAI…TYAG), 377-397 (LVTR…GGSS), 402-422 (LIII…IPLL), 438-458 (IYII…NIYY), and 478-498 (VFIG…VIYL). The tract at residues 511–552 (PNKNDPQQQTNMENGLAKSTEGPEMVDRAPYREDLADIPLPE) is disordered. A compositionally biased stretch (polar residues) spans 514 to 523 (NDPQQQTNME). The segment covering 535–545 (MVDRAPYREDL) has biased composition (basic and acidic residues).

The protein belongs to the NRAMP (TC 2.A.55) family.

Its subcellular location is the membrane. In terms of biological role, probable divalent metal transporter. In Populus trichocarpa (Western balsam poplar), this protein is Metal transporter Nramp6.1.